The primary structure comprises 263 residues: Endonuclease 8 (263 aa).

Proline 2 (schiff-base intermediate with DNA) is an active-site residue. The active-site Proton donor is glutamate 3. Lysine 53 acts as the Proton donor; for beta-elimination activity in catalysis. DNA-binding residues include glutamine 70, arginine 125, and asparagine 169. Residues lysine 229–histidine 263 form an FPG-type zinc finger. The active-site Proton donor; for delta-elimination activity is the arginine 253.

The protein belongs to the FPG family. It depends on Zn(2+) as a cofactor.

The enzyme catalyses 2'-deoxyribonucleotide-(2'-deoxyribose 5'-phosphate)-2'-deoxyribonucleotide-DNA = a 3'-end 2'-deoxyribonucleotide-(2,3-dehydro-2,3-deoxyribose 5'-phosphate)-DNA + a 5'-end 5'-phospho-2'-deoxyribonucleoside-DNA + H(+). Its function is as follows. Involved in base excision repair of DNA damaged by oxidation or by mutagenic agents. Acts as a DNA glycosylase that recognizes and removes damaged bases. Has a preference for oxidized pyrimidines, such as thymine glycol, 5,6-dihydrouracil and 5,6-dihydrothymine. Has AP (apurinic/apyrimidinic) lyase activity and introduces nicks in the DNA strand. Cleaves the DNA backbone by beta-delta elimination to generate a single-strand break at the site of the removed base with both 3'- and 5'-phosphates. The chain is Endonuclease 8 from Klebsiella pneumoniae subsp. pneumoniae (strain ATCC 700721 / MGH 78578).